A 153-amino-acid chain; its full sequence is Histone H2B.10 (153 aa).

Composition is skewed to basic and acidic residues over residues 1-28 (MAPK…EKAL) and 36-53 (EKRL…EGKK). The tract at residues 1–61 (MAPKAEKKPA…KKAGRKKAKK (61 aa)) is disordered. Residues K7 and K37 each carry the N6-acetyllysine modification. K149 is covalently cross-linked (Glycyl lysine isopeptide (Lys-Gly) (interchain with G-Cter in ubiquitin)).

The protein belongs to the histone H2B family. As to quaternary structure, the nucleosome is a histone octamer containing two molecules each of H2A, H2B, H3 and H4 assembled in one H3-H4 heterotetramer and two H2A-H2B heterodimers. The octamer wraps approximately 147 bp of DNA. Post-translationally, can be acetylated to form H2BK6ac and H2BK33ac. Monoubiquitinated by BRE1 to form H2BK143ub1 and deubiquitinated by UBP26. Required for heterochromatic histone H3 di- and trimethylation at H3K4me. May give a specific tag for epigenetic transcriptional activation.

The protein localises to the nucleus. The protein resides in the chromosome. In terms of biological role, core component of nucleosome. Nucleosomes wrap and compact DNA into chromatin, limiting DNA accessibility to the cellular machineries which require DNA as a template. Histones thereby play a central role in transcription regulation, DNA repair, DNA replication and chromosomal stability. DNA accessibility is regulated via a complex set of post-translational modifications of histones, also called histone code, and nucleosome remodeling. This Oryza sativa subsp. japonica (Rice) protein is Histone H2B.10 (H2B.10).